The primary structure comprises 206 residues: Urease accessory protein UreG (206 aa).

Residue 14 to 21 (GPVGSGKT) coordinates GTP.

This sequence belongs to the SIMIBI class G3E GTPase family. UreG subfamily. In terms of assembly, homodimer. UreD, UreF and UreG form a complex that acts as a GTP-hydrolysis-dependent molecular chaperone, activating the urease apoprotein by helping to assemble the nickel containing metallocenter of UreC. The UreE protein probably delivers the nickel.

The protein resides in the cytoplasm. Its function is as follows. Facilitates the functional incorporation of the urease nickel metallocenter. This process requires GTP hydrolysis, probably effectuated by UreG. This chain is Urease accessory protein UreG, found in Methylocella silvestris (strain DSM 15510 / CIP 108128 / LMG 27833 / NCIMB 13906 / BL2).